Reading from the N-terminus, the 347-residue chain is 4-hydroxythreonine-4-phosphate dehydrogenase (347 aa).

Substrate-binding residues include histidine 137 and threonine 138. A divalent metal cation contacts are provided by histidine 174, histidine 219, and histidine 274. Substrate-binding residues include lysine 282, asparagine 291, and arginine 300.

It belongs to the PdxA family. In terms of assembly, homodimer. Requires Zn(2+) as cofactor. Mg(2+) is required as a cofactor. The cofactor is Co(2+).

The protein resides in the cytoplasm. The catalysed reaction is 4-(phosphooxy)-L-threonine + NAD(+) = 3-amino-2-oxopropyl phosphate + CO2 + NADH. Its pathway is cofactor biosynthesis; pyridoxine 5'-phosphate biosynthesis; pyridoxine 5'-phosphate from D-erythrose 4-phosphate: step 4/5. Catalyzes the NAD(P)-dependent oxidation of 4-(phosphooxy)-L-threonine (HTP) into 2-amino-3-oxo-4-(phosphooxy)butyric acid which spontaneously decarboxylates to form 3-amino-2-oxopropyl phosphate (AHAP). The polypeptide is 4-hydroxythreonine-4-phosphate dehydrogenase (Cupriavidus pinatubonensis (strain JMP 134 / LMG 1197) (Cupriavidus necator (strain JMP 134))).